The sequence spans 216 residues: Adenylate kinase (216 aa).

10-15 is a binding site for ATP; the sequence is GAGKGT. The interval 30–59 is NMP; it reads STGDMFRAAMKAETELGLQAKSFIDKGALV. AMP-binding positions include T31, R36, 57–59, 85–88, and Q92; these read ALV and GFPR. The interval 126 to 163 is LID; that stretch reads GRRICKECGATYHLEFNPPAKADVCDKCGGELYQRSDD. R127 provides a ligand contact to ATP. Zn(2+)-binding residues include C130 and C133. 136–137 is a binding site for ATP; the sequence is TY. The Zn(2+) site is built by C150 and C153. 2 residues coordinate AMP: R160 and R171. Q199 provides a ligand contact to ATP.

This sequence belongs to the adenylate kinase family. As to quaternary structure, monomer.

Its subcellular location is the cytoplasm. The enzyme catalyses AMP + ATP = 2 ADP. It participates in purine metabolism; AMP biosynthesis via salvage pathway; AMP from ADP: step 1/1. Catalyzes the reversible transfer of the terminal phosphate group between ATP and AMP. Plays an important role in cellular energy homeostasis and in adenine nucleotide metabolism. The protein is Adenylate kinase of Bacillus mycoides (strain KBAB4) (Bacillus weihenstephanensis).